The chain runs to 172 residues: MAGVNNRVKITNDIELKDRLVAINRVTKVTKGGRTFSFSAIVVVGNEEGIIGWGLGKAGEVTAAIAKGVESAKKNLTRVPVLKGTVPHEQSAKFGGAEVFIKPASHGTGVVAGGAMRAVLESVGVTDVLAKSKGSSNPHNLVKATIMALGEMRDARMIAQNRGISVEKVFRG.

An S5 DRBM domain is found at 16-79; it reads LKDRLVAINR…ESAKKNLTRV (64 aa).

It belongs to the universal ribosomal protein uS5 family. Part of the 30S ribosomal subunit. Contacts proteins S4 and S8.

Functionally, with S4 and S12 plays an important role in translational accuracy. Located at the back of the 30S subunit body where it stabilizes the conformation of the head with respect to the body. This chain is Small ribosomal subunit protein uS5, found in Bacteroides fragilis (strain ATCC 25285 / DSM 2151 / CCUG 4856 / JCM 11019 / LMG 10263 / NCTC 9343 / Onslow / VPI 2553 / EN-2).